The sequence spans 448 residues: Protease Do-like 8, chloroplastic (448 aa).

The serine protease stretch occupies residues 152-333 (EGNGSGVVWD…IPSSTVLKIV (182 aa)). Active-site charge relay system residues include His-171, Asp-214, and Ser-292. The 98-residue stretch at 336–433 (LIQFSKVLRA…DKVTLKIKRG (98 aa)) folds into the PDZ domain.

The protein belongs to the peptidase S1C family.

Its subcellular location is the plastid. It localises to the chloroplast thylakoid lumen. Its function is as follows. Probable serine protease. This is Protease Do-like 8, chloroplastic (DEGP8) from Arabidopsis thaliana (Mouse-ear cress).